An 86-amino-acid chain; its full sequence is Sodium channel neurotoxin MeuNaTxalpha-4 (86 aa).

A signal peptide spans 1–19; the sequence is MNYLILISFALLVITGVES. Positions 21-85 constitute an LCN-type CS-alpha/beta domain; that stretch reads RDAYIAKPHN…VPIRIPGKCH (65 aa). Intrachain disulfides connect Cys31-Cys84, Cys35-Cys57, Cys43-Cys67, and Cys47-Cys69. Residue Arg86 is a propeptide, removed by a carboxypeptidase.

The protein belongs to the long (4 C-C) scorpion toxin superfamily. Sodium channel inhibitor family. Alpha subfamily. As to expression, expressed by the venom gland.

The protein localises to the secreted. Functionally, alpha toxins bind voltage-independently at site-3 of sodium channels (Nav) and inhibit the inactivation of the activated channels, thereby blocking neuronal transmission. This toxin inhibits inactivation of drosophila DmNav1 (EC(50)=130 nM). This Mesobuthus eupeus (Lesser Asian scorpion) protein is Sodium channel neurotoxin MeuNaTxalpha-4.